Consider the following 395-residue polypeptide: DNA primase small subunit PriS (395 aa).

Residues aspartate 95, aspartate 97, and aspartate 302 contribute to the active site.

The protein belongs to the eukaryotic-type primase small subunit family. As to quaternary structure, heterodimer of a small subunit (PriS) and a large subunit (PriL). It depends on Mg(2+) as a cofactor. The cofactor is Mn(2+).

Functionally, catalytic subunit of DNA primase, an RNA polymerase that catalyzes the synthesis of short RNA molecules used as primers for DNA polymerase during DNA replication. The small subunit contains the primase catalytic core and has DNA synthesis activity on its own. Binding to the large subunit stabilizes and modulates the activity, increasing the rate of DNA synthesis while decreasing the length of the DNA fragments, and conferring RNA synthesis capability. The DNA polymerase activity may enable DNA primase to also catalyze primer extension after primer synthesis. May also play a role in DNA repair. The chain is DNA primase small subunit PriS from Methanothrix thermoacetophila (strain DSM 6194 / JCM 14653 / NBRC 101360 / PT) (Methanosaeta thermophila).